A 270-amino-acid polypeptide reads, in one-letter code: Proteasome subunit alpha type-1 (270 aa).

The segment at 239–270 (SMEAAEEAPAAEAESSSMQEEDKGTDAAPMDI) is disordered. Residues 245-256 (EAPAAEAESSSM) show a composition bias toward low complexity.

It belongs to the peptidase T1A family. As to quaternary structure, the 26S proteasome consists of a 20S proteasome core and two 19S regulatory subunits. The 20S proteasome core is composed of 28 subunits that are arranged in four stacked rings, resulting in a barrel-shaped structure. The two end rings are each formed by seven alpha subunits, and the two central rings are each formed by seven beta subunits. The catalytic chamber with the active sites is on the inside of the barrel.

Its subcellular location is the cytoplasm. It localises to the nucleus. In terms of biological role, the proteasome is a multicatalytic proteinase complex which is characterized by its ability to cleave peptides with Arg, Phe, Tyr, Leu, and Glu adjacent to the leaving group at neutral or slightly basic pH. The proteasome has an ATP-dependent proteolytic activity. The protein is Proteasome subunit alpha type-1 (PAF1) of Oryza sativa subsp. japonica (Rice).